Consider the following 617-residue polypeptide: Hemagglutinin glycoprotein (617 aa).

The Intravirion segment spans residues 1–37; the sequence is MSPQRDRINAFYKDNPHPKGSRIVINREHLMIDRPYV. The stalk stretch occupies residues 1–154; it reads MSPQRDRINA…RIKLDYDQYC (154 aa). Residues 38-58 traverse the membrane as a helical; Signal-anchor for type II membrane protein segment; it reads LLAVLFVMFLSLIGLLAIAGI. The Virion surface segment spans residues 59–617; it reads RLHRAAIYTA…VTREDGTNRR (559 aa). N-linked (GlcNAc...) asparagine; by host glycans are attached at residues Asn-168, Asn-187, Asn-200, Asn-215, and Asn-238. Cystine bridges form between Cys-188–Cys-606, Cys-287–Cys-300, Cys-381–Cys-494, Cys-386–Cys-394, and Cys-570–Cys-579. The tract at residues 458-543 is interaction with host NECTIN4 receptor; that stretch reads PMKNLALGVI…VEHAVVYYVY (86 aa).

The protein belongs to the paramyxoviruses hemagglutinin-neuraminidase family. Non-sialidase subfamily. Homodimer; disulfide-linked. Further forms homotetramer (dimer of dimers). Interacts (via C-terminus) with human NECTIN4 (via N-terminus); this interaction allows attachment to the respiratory epithelium and viral entry. Interacts (via C-terminus) with human SLAMF1/CD150 (via N-terminus); this interaction allows attachment and viral entry into the CD150-expressing immune cells. Interacts with human CD46 antigen (via N-terminus); this interaction allows attachment and viral entry of vaccine and laboratory-adapted strains.

Its subcellular location is the virion membrane. It is found in the host cell membrane. In terms of biological role, attaches the virus to the human SLAMF1/CD150 receptor for entry into host dendritic cells, macrophages, activated memory T cells and naive or memory B cells, thereby explaining the long immunosuppression that follows infection. In the respiratory airways, binds to the NECTIN4 receptor for entry into the host cell. Binding of H protein to the receptor induces a conformational change that allows the F protein to trigger virion/cell membranes fusion. The vaccine and laboratory-adapted strains use host CD46 as an alternate receptor. The high degree of interaction between H and CD46 results in down-regulation of the latter from the surface of infected cells, rendering them more sensitive to c3b-mediated complement lysis. The protein is Hemagglutinin glycoprotein (H) of Measles virus (strain Edmonston) (MeV).